The chain runs to 223 residues: ATP phosphoribosyltransferase (223 aa).

The protein belongs to the ATP phosphoribosyltransferase family. Short subfamily. As to quaternary structure, heteromultimer composed of HisG and HisZ subunits.

It is found in the cytoplasm. The catalysed reaction is 1-(5-phospho-beta-D-ribosyl)-ATP + diphosphate = 5-phospho-alpha-D-ribose 1-diphosphate + ATP. Its pathway is amino-acid biosynthesis; L-histidine biosynthesis; L-histidine from 5-phospho-alpha-D-ribose 1-diphosphate: step 1/9. Functionally, catalyzes the condensation of ATP and 5-phosphoribose 1-diphosphate to form N'-(5'-phosphoribosyl)-ATP (PR-ATP). Has a crucial role in the pathway because the rate of histidine biosynthesis seems to be controlled primarily by regulation of HisG enzymatic activity. The chain is ATP phosphoribosyltransferase from Novosphingobium aromaticivorans (strain ATCC 700278 / DSM 12444 / CCUG 56034 / CIP 105152 / NBRC 16084 / F199).